The primary structure comprises 69 residues: Large ribosomal subunit protein uL29 (69 aa).

The protein belongs to the universal ribosomal protein uL29 family.

In Natronomonas pharaonis (strain ATCC 35678 / DSM 2160 / CIP 103997 / JCM 8858 / NBRC 14720 / NCIMB 2260 / Gabara) (Halobacterium pharaonis), this protein is Large ribosomal subunit protein uL29.